Reading from the N-terminus, the 679-residue chain is MASEQTIDGAAAIPSGGGDEPFLGLLDVALLAVLIGGAAFYFLRSRKKEEEPTRSYSIQPTTVCTTSASDNSFIKKLKASGRSLVVFYGSQTGTGEEFAGRLAKEGIRYRLKGMVADPEECDMEELLQLKDIDNSLAVFCLATYGEGDPTDNAMEFYEWITSGDVDLSGLNYAVFGLGNKTYEHYNKVAIYVDKRLEELGANRVFELGLGDDDANIEDDFITWKDRFWPAVCDHFGIEGGGEEVLIRQYRLLEQPDVQPDRIYTGEIARLHSIQNQRPPFDAKNPFLAPIKVNRELHKGGGRSCMHIELSIEGSKMRYDAGDHVAMFPVNDKSLVEKLGQLCNADLDTVFSLINTDTDSSKKHPFPCPTTYRTALTHYLEITAIPRTHILKELAEYCTDEKEKELLRSMASISPEGKEKYQSWIQDACRNIVHILEDIKSCRPPIDHVCELLPRLQPRYYSISSSAKLHPTDVHVTAVLVEYKTPTGRINKGVATTYLKNKQPQGSEEVKVPVFIRKSQFRLPTKPETPIIMVGPGTGLAPFRGFIQERQFLRDEGKTVGESILYFGCRKRSEDYIYESELEEWVKKGTLNLKAAFSRDQGKKVYVQHLLEQDADLIWNVIGENKGHFYICGDAKNMAVDVRNILVKILSTKGNMSEADAVQYIKKMEAQKRYSADVWS.

At 1–21 the chain is on the lumenal side; the sequence is MASEQTIDGAAAIPSGGGDEP. A helical transmembrane segment spans residues 22 to 42; it reads FLGLLDVALLAVLIGGAAFYF. Topologically, residues 43–679 are cytoplasmic; it reads LRSRKKEEEP…QKRYSADVWS (637 aa). Residues 84–228 enclose the Flavodoxin-like domain; the sequence is LVVFYGSQTG…DFITWKDRFW (145 aa). FMN is bound by residues 90-95, 142-145, 177-186, and Asp212; these read SQTGTG, ATYG, and LGNKTYEHYN. One can recognise an FAD-binding FR-type domain in the interval 283–523; that stretch reads KNPFLAPIKV…FIRKSQFRLP (241 aa). Arg302 is an NADP(+) binding site. Residues 458 to 461, 476 to 478, Tyr482, and 492 to 495 each bind FAD; these read RYYS, TAV, and GVAT. NADP(+)-binding positions include Thr537, 597–598, 603–607, and Asp640; these read SR and KVYVQ. FAD is bound at residue Trp678.

It belongs to the NADPH--cytochrome P450 reductase family. In the N-terminal section; belongs to the flavodoxin family. The protein in the C-terminal section; belongs to the flavoprotein pyridine nucleotide cytochrome reductase family. Interacts with sturkopf. Requires FAD as cofactor. The cofactor is FMN. High in antennae.

The protein resides in the endoplasmic reticulum membrane. It carries out the reaction 2 oxidized [cytochrome P450] + NADPH = 2 reduced [cytochrome P450] + NADP(+) + H(+). Functionally, this enzyme is required for electron transfer from NADP to cytochrome p450 in microsomes. It can also provide electron transfer to heme oxygenase and cytochrome b5. May function to clear the olfactory organ (antennae) from accumulating chemicals. This Drosophila melanogaster (Fruit fly) protein is NADPH--cytochrome P450 reductase (Cpr).